The sequence spans 482 residues: MAEAATPGTTATTSGAGAAAATAAAASPTPIPTVTAPSLGAGGGGGGSDGSGGGWTKQVTCRYFMHGVCKEGDNCRYSHDLSDSPYSVVCKYFQRGYCIYGDRCRYEHSKPLKQEEATATELTTKSSLAASSSLSSIVGPLVEMNTGEAESRNSNFATVGAGSEDWVNAIEFVPGQPYCGRTAPSCTEAPLQGSVTKEESEKEQTAVETKKQLCPYAAVGECRYGENCVYLHGDSCDMCGLQVLHPMDAAQRSQHIKSCIEAHEKDMELSFAVQRSKDMVCGICMEVVYEKANPSERRFGILSNCNHTYCLKCIRKWRSAKQFESKIIKSCPECRITSNFVIPSEYWVEEKEEKQKLILKYKEAMSNKACRYFDEGRGSCPFGGNCFYKHAYPDGRREEPQRQKVGTSSRYRAQRRNHFWELIEERENSNPFDNDEEEVVTFELGEMLLMLLAAGGDDELTDSEDEWDLFHDELEDFYDLDL.

Residues Ala-26–Ser-38 show a composition bias toward low complexity. The disordered stretch occupies residues Ala-26–Gly-52. Over residues Gly-40–Gly-52 the composition is skewed to gly residues. C3H1-type zinc fingers lie at residues Trp-55–Ser-82, Ser-84–Pro-111, and Glu-208–Ser-235. The interval Cys-236–His-263 is makorin-type Cys-His. Residues Cys-281–Arg-335 form an RING-type zinc finger. The segment at Ala-364–Pro-393 adopts a C3H1-type 4 zinc-finger fold.

Interacts with p53/TP53 and CDKN1A. Interacts with TERT, modulating telomere length homeostasis. In terms of processing, auto-ubiquitinated; which leads to proteasomal degradation. As to expression, ubiquitous.

The catalysed reaction is S-ubiquitinyl-[E2 ubiquitin-conjugating enzyme]-L-cysteine + [acceptor protein]-L-lysine = [E2 ubiquitin-conjugating enzyme]-L-cysteine + N(6)-ubiquitinyl-[acceptor protein]-L-lysine.. Its pathway is protein modification; protein ubiquitination. Its function is as follows. E3 ubiquitin ligase catalyzing the covalent attachment of ubiquitin moieties onto substrate proteins. These substrates include FILIP1, p53/TP53, CDKN1A and TERT. Keeps cells alive by suppressing p53/TP53 under normal conditions, but stimulates apoptosis by repressing CDKN1A under stress conditions. Acts as a negative regulator of telomerase. Has negative and positive effects on RNA polymerase II-dependent transcription. The protein is E3 ubiquitin-protein ligase makorin-1 (MKRN1) of Homo sapiens (Human).